Here is a 216-residue protein sequence, read N- to C-terminus: Octanoyltransferase (216 aa).

The BPL/LPL catalytic domain maps to 33–212 (AHTPDELWLV…ILSNILGLTA (180 aa)). Substrate is bound by residues 72-79 (RGGQVTYH), 139-141 (SLG), and 152-154 (GVA). The Acyl-thioester intermediate role is filled by Cys170.

This sequence belongs to the LipB family.

It localises to the cytoplasm. It carries out the reaction octanoyl-[ACP] + L-lysyl-[protein] = N(6)-octanoyl-L-lysyl-[protein] + holo-[ACP] + H(+). The protein operates within protein modification; protein lipoylation via endogenous pathway; protein N(6)-(lipoyl)lysine from octanoyl-[acyl-carrier-protein]: step 1/2. Functionally, catalyzes the transfer of endogenously produced octanoic acid from octanoyl-acyl-carrier-protein onto the lipoyl domains of lipoate-dependent enzymes. Lipoyl-ACP can also act as a substrate although octanoyl-ACP is likely to be the physiological substrate. The sequence is that of Octanoyltransferase from Saccharophagus degradans (strain 2-40 / ATCC 43961 / DSM 17024).